The chain runs to 257 residues: Glutamate racemase (257 aa).

Residues 12–13 (DS) and 44–45 (YG) each bind substrate. Residue Cys-75 is the Proton donor/acceptor of the active site. 76 to 77 (NT) contributes to the substrate binding site. Cys-186 functions as the Proton donor/acceptor in the catalytic mechanism. 187 to 188 (TH) contributes to the substrate binding site.

Belongs to the aspartate/glutamate racemases family.

It carries out the reaction L-glutamate = D-glutamate. Its pathway is cell wall biogenesis; peptidoglycan biosynthesis. In terms of biological role, provides the (R)-glutamate required for cell wall biosynthesis. The protein is Glutamate racemase of Clostridium kluyveri (strain NBRC 12016).